A 238-amino-acid chain; its full sequence is Orotidine 5'-phosphate decarboxylase (238 aa).

Substrate is bound by residues Asp18, Lys40, 67–76 (DMKLLDIDNT), Thr122, Arg183, Gln192, and Arg213. The Proton donor role is filled by Lys69.

Belongs to the OMP decarboxylase family. Type 1 subfamily. As to quaternary structure, homodimer.

The enzyme catalyses orotidine 5'-phosphate + H(+) = UMP + CO2. It functions in the pathway pyrimidine metabolism; UMP biosynthesis via de novo pathway; UMP from orotate: step 2/2. Functionally, catalyzes the decarboxylation of orotidine 5'-monophosphate (OMP) to uridine 5'-monophosphate (UMP). The chain is Orotidine 5'-phosphate decarboxylase from Brucella canis (strain ATCC 23365 / NCTC 10854 / RM-666).